The sequence spans 595 residues: Isoprene synthase, chloroplastic (595 aa).

The N-terminal 37 residues, 1–37 (MATELLCLHRPISLTHKLFRNPLPKVIQATPLTLKLR), are a transit peptide targeting the chloroplast. A dimethylallyl diphosphate-binding site is contributed by D345. Mg(2+) contacts are provided by D345 and D349. The DDXXD motif motif lies at 345–349 (DDIYD). Residues E423, R486, and N489 each contribute to the dimethylallyl diphosphate site. Residues N489, S493, and E497 each coordinate Mg(2+).

It belongs to the terpene synthase family. Tpsb subfamily. Requires Mg(2+) as cofactor. As to expression, predominantly expressed in leaves.

It localises to the plastid. Its subcellular location is the chloroplast. It carries out the reaction dimethylallyl diphosphate = isoprene + diphosphate. It participates in terpene metabolism. Functionally, lyase that catalyzes the formation of isoprene from dimethylallyl diphosphate, but not from isopentenyl diphosphate or geranyl diphosphate. In Populus alba (White poplar), this protein is Isoprene synthase, chloroplastic.